Here is a 91-residue protein sequence, read N- to C-terminus: Small ribosomal subunit protein uS19 (91 aa).

Belongs to the universal ribosomal protein uS19 family.

Protein S19 forms a complex with S13 that binds strongly to the 16S ribosomal RNA. This chain is Small ribosomal subunit protein uS19, found in Prochlorococcus marinus subsp. pastoris (strain CCMP1986 / NIES-2087 / MED4).